A 228-amino-acid polypeptide reads, in one-letter code: UPF0758 protein stu1465 (228 aa).

Residues 103-225 (QIMSSQQVAR…YYSFREERED (123 aa)) form the MPN domain. Zn(2+)-binding residues include H174, H176, and D187. A JAMM motif motif is present at residues 174 to 187 (HNHPSGEAYPSRND).

This sequence belongs to the UPF0758 family.

The sequence is that of UPF0758 protein stu1465 from Streptococcus thermophilus (strain ATCC BAA-250 / LMG 18311).